A 193-amino-acid chain; its full sequence is uncharacterized protein (193 aa).

The next 4 helical transmembrane spans lie at 8–28, 46–66, 82–102, and 141–161; these read GVLV…VVAI, FFIA…VASA, GLSI…ALVV, and IALT…LLAA.

This sequence to M.leprae ML1222.

Its subcellular location is the cell membrane. This is an uncharacterized protein from Mycobacterium tuberculosis (strain CDC 1551 / Oshkosh).